The chain runs to 506 residues: MNNFELILLYYGKKIFMSFVKDFKLLLKARYPIIYINTYEEERVEYVIKSAIQSFTNRAVYSWDFIEGYCNNPNDNGYAIRNPLQALEFIDKFTLETPLLVLLKDFHLFLNDISVSRKLRNLAKSLRNQSKTIVIIASDLTIPLNLSDSITILHFPLPKNSEIKKELLRIQESLGYSLPEHSLDNLVKASQGLSLEKIRRVLAKIIATYKEINVESLDLVFKEKQQLISQTQILEFYNPVTKISDIGGLNELKSWLKFRAASFSKRAEEYGLPIPKGLLLVGIQGTGKSLTAKSIANEWNLPLLKLDVGRLFGGIIGESEARVRQMIQFAETISPCILWIDEIDKAFTGSNFNNDSGTTKRVFGTFITWLSEKKSPVFVVATANNIDSLPPELLRKGRFDEVFFIGLPDLKERECIFKVHLKKIRPKSWSTYDTEILSAQSNRFSGAEIEESIYEAMHIAFNENREFTTSDILNSLKRVVPLAYTSQKNIEELEDWASAGKIRLAS.

282–289 (GIQGTGKS) serves as a coordination point for ATP.

It belongs to the AAA ATPase family. Highly divergent.

The protein localises to the plastid. It is found in the chloroplast. This is an uncharacterized protein from Guillardia theta (Cryptophyte).